A 335-amino-acid polypeptide reads, in one-letter code: Probable deoxyhypusine synthase (335 aa).

K308 serves as the catalytic Nucleophile.

It belongs to the deoxyhypusine synthase family. NAD(+) serves as cofactor.

The catalysed reaction is [eIF5A protein]-L-lysine + spermidine = [eIF5A protein]-deoxyhypusine + propane-1,3-diamine. It functions in the pathway protein modification; eIF5A hypusination. Catalyzes the NAD-dependent oxidative cleavage of spermidine and the subsequent transfer of the butylamine moiety of spermidine to the epsilon-amino group of a specific lysine residue of the eIF-5A precursor protein to form the intermediate deoxyhypusine residue. The polypeptide is Probable deoxyhypusine synthase (Thermococcus onnurineus (strain NA1)).